Here is a 550-residue protein sequence, read N- to C-terminus: MGLKVNVSAIFMAVLLTLQTPTGQIHWGNLSKIGVVGIGSASYKVMTRSSHQSLVIKLMPNITLLNNCTRVEIAEYRRLLRTVLEPIRDALNAMTQNIRPVQSVASSRRHKRFAGVVLAGAALGVATAAQITAGIALHQSMLNSQAIDNLRASLETTNQAIEAIRQAGQEMILAVQGVQDYINNELIPSMNQLSCDLIGQKLGLKLLRYYTEILSLFGPSLRDPISAEISIQALSYALGGDINKVLEKLGYSGGDLLGILESRGIKARITHVDTESYLIVLSIAYPTLSEIKGVIVHRLEGVSYNIGSQEWYTTVPKYVATQGYLISNFDESSCTFMPEGTVCSQNALYPMSPLLQECLRGSTKSCARTLVSGSFGNRFILSQGNLIANCASILCKCYTTGTIINQDPDKILTYIAADHCPVVEVNGVTIQVGSRRYPDAVYLHRIDLGPPILLERLDVGTNLGNAIAKLEDAKELLESSDQILRSMKGLSSTCIVYILIAVCLGGLIGIPALICCCRGRCNKKGEQVGMSRPGLKPDLTGTSKSYVRSL.

The signal sequence occupies residues 1–23 (MGLKVNVSAIFMAVLLTLQTPTG). At 24–487 (QIHWGNLSKI…ESSDQILRSM (464 aa)) the chain is on the extracellular side. Asn-29, Asn-61, and Asn-67 each carry an N-linked (GlcNAc...) asparagine; by host glycan. The HRC stretch occupies residues 69–95 (TRVEIAEYRRLLRTVLEPIRDALNAMT). The fusion peptide stretch occupies residues 113–138 (FAGVVLAGAALGVATAAQITAGIALH). The stretch at 138–166 (HQSMLNSQAIDNLRASLETTNQAIEAIRQ) forms a coiled coil. The segment at 139–215 (QSMLNSQAID…LLRYYTEILS (77 aa)) is HRA. Disulfide bonds link Cys-334-Cys-343, Cys-358-Cys-366, Cys-390-Cys-395, and Cys-397-Cys-420. The tract at residues 367–444 (ARTLVSGSFG…RRYPDAVYLH (78 aa)) is interaction with hemagglutinin. The interval 445-494 (RIDLGPPILLERLDVGTNLGNAIAKLEDAKELLESSDQILRSMKGLSSTC) is HRB. The stretch at 462-487 (NLGNAIAKLEDAKELLESSDQILRSM) forms a coiled coil. Residues 488–518 (KGLSSTCIVYILIAVCLGGLIGIPALICCCR) form a helical membrane-spanning segment. Over 519 to 550 (GRCNKKGEQVGMSRPGLKPDLTGTSKSYVRSL) the chain is Cytoplasmic.

It belongs to the paramyxoviruses fusion glycoprotein family. As to quaternary structure, homotrimer of disulfide-linked F1-F2. The inactive precursor F0 is glycosylated and proteolytically cleaved into F1 and F2 to be functionally active. The cleavage is mediated by host furin during the transport and maturation of the polypeptide.

It localises to the virion membrane. Its subcellular location is the host cell membrane. Functionally, class I viral fusion protein. Under the current model, the protein has at least 3 conformational states: pre-fusion native state, pre-hairpin intermediate state, and post-fusion hairpin state. During viral and plasma cell membrane fusion, the heptad repeat (HR) regions assume a trimer-of-hairpins structure, positioning the fusion peptide in close proximity to the C-terminal region of the ectodomain. The formation of this structure appears to drive apposition and subsequent fusion of viral and plasma cell membranes. Directs fusion of viral and cellular membranes leading to delivery of the nucleocapsid into the cytoplasm. This fusion is pH independent and occurs directly at the outer cell membrane. During viral entry or virus-mediated fusion between infected cells and neighboring susceptible cells, the head domain of the H protein initially binds to its receptor and then the stalk region of the H protein transmits the fusion-triggering signal to the F protein. Upon HN binding to its cellular receptor, the hydrophobic fusion peptide is unmasked and interacts with the cellular membrane, inducing the fusion between cell and virion membranes. Later in infection, F proteins expressed at the plasma membrane of infected cells could mediate fusion with adjacent cells to form syncytia, a cytopathic effect that could lead to tissue necrosis. Its function is as follows. Some hyperfusogenic isolates can induce membrane fusion in SLAM- and nectin-4-negative cells and are linked to fatal subacute sclerosing panencephalitis (SSPE) or measles inclusion body encephalitis (MIBE). The neuropathogenicity is closely associated with enhanced propagation mediated by cell-to-cell fusion in the brain, which is principally regulated by hyperfusogenic mutations of the viral F protein. Cell-to-cell transmission of the virus also occurs with hyperfusogenic isolates. This is Fusion glycoprotein F0 (F) from Homo sapiens (Human).